The chain runs to 184 residues: MSCRSEHIWIEPIKGARKTSNFCWAIILFLGSLGFLLVGTSSYLGRNLISLFPSQEIVFFPQGIVMSFYGIAGLFISSYLWCTISWNVGSGYDRFDIKDGIVCIFRWGFPGKNRRVFLRFLIKDIQSVRIEVKEGIYARRVLYMDIRGQGAIPLTRTDENFTPREMEQKAAELAYFLRVPIEVF.

The next 2 helical transmembrane spans lie at 22 to 42 and 57 to 77; these read FCWAIILFLGSLGFLLVGTSS and IVFFPQGIVMSFYGIAGLFIS.

Belongs to the Ycf4 family.

It localises to the plastid. The protein resides in the chloroplast thylakoid membrane. Seems to be required for the assembly of the photosystem I complex. This is Photosystem I assembly protein Ycf4 from Helianthus annuus (Common sunflower).